We begin with the raw amino-acid sequence, 249 residues long: Probable transcriptional regulatory protein LBJ_0543 (249 aa).

Belongs to the TACO1 family.

The protein localises to the cytoplasm. In Leptospira borgpetersenii serovar Hardjo-bovis (strain JB197), this protein is Probable transcriptional regulatory protein LBJ_0543.